A 557-amino-acid polypeptide reads, in one-letter code: Dihydroxy-acid dehydratase (557 aa).

Position 78 (Asp-78) interacts with Mg(2+). Residue Cys-119 coordinates [2Fe-2S] cluster. Mg(2+) contacts are provided by Asp-120 and Lys-121. Lys-121 is subject to N6-carboxylysine. Cys-191 contributes to the [2Fe-2S] cluster binding site. Glu-442 contacts Mg(2+). Ser-468 (proton acceptor) is an active-site residue.

The protein belongs to the IlvD/Edd family. Homodimer. [2Fe-2S] cluster serves as cofactor. Requires Mg(2+) as cofactor.

It carries out the reaction (2R)-2,3-dihydroxy-3-methylbutanoate = 3-methyl-2-oxobutanoate + H2O. The enzyme catalyses (2R,3R)-2,3-dihydroxy-3-methylpentanoate = (S)-3-methyl-2-oxopentanoate + H2O. The protein operates within amino-acid biosynthesis; L-isoleucine biosynthesis; L-isoleucine from 2-oxobutanoate: step 3/4. It participates in amino-acid biosynthesis; L-valine biosynthesis; L-valine from pyruvate: step 3/4. Functionally, functions in the biosynthesis of branched-chain amino acids. Catalyzes the dehydration of (2R,3R)-2,3-dihydroxy-3-methylpentanoate (2,3-dihydroxy-3-methylvalerate) into 2-oxo-3-methylpentanoate (2-oxo-3-methylvalerate) and of (2R)-2,3-dihydroxy-3-methylbutanoate (2,3-dihydroxyisovalerate) into 2-oxo-3-methylbutanoate (2-oxoisovalerate), the penultimate precursor to L-isoleucine and L-valine, respectively. The chain is Dihydroxy-acid dehydratase from Syntrophobacter fumaroxidans (strain DSM 10017 / MPOB).